A 565-amino-acid chain; its full sequence is Wee1-like protein kinase 2 (565 aa).

2 stretches are compositionally biased toward basic and acidic residues: residues 1-12 (MGDNGDNKELKQ) and 26-52 (EGQK…DSEA). 2 disordered regions span residues 1–142 (MGDN…TPGP) and 169–189 (KSNG…EEGK). Phosphoserine is present on Ser77. A Nuclear localization signal motif is present at residues 173–175 (KRK). Positions 178 to 189 (RDLEEAGPEEGK) are enriched in basic and acidic residues. In terms of domain architecture, Protein kinase spans 214-492 (FLEVEKIGVG…TRSRVLCPSL (279 aa)). Residues 220–228 (IGVGEFGTV) and Lys243 each bind ATP. The Nuclear export signal signature appears at 317-331 (KLKDILLQISLGLKY). Asp341 functions as the Proton acceptor in the catalytic mechanism. Mg(2+) is bound by residues Asn346 and Asp382. Residues 495-521 (TEELQQQLNLEKFKTATLERELKEVQR) adopt a coiled-coil conformation. Residues 518–565 (EVQRAQSSKEGQSSPGVTGTHTGSRSTRRLVGGKSAKSSSFTWGQSSP) form a disordered region. Polar residues-rich tracts occupy residues 521–534 (RAQS…SPGV) and 553–565 (AKSS…QSSP).

Belongs to the protein kinase superfamily. Ser/Thr protein kinase family. WEE1 subfamily. Post-translationally, phosphorylation leads to increase its activity. Ovary-specific.

Its subcellular location is the nucleus. The enzyme catalyses L-tyrosyl-[protein] + ATP = O-phospho-L-tyrosyl-[protein] + ADP + H(+). Functionally, oocyte-specific protein tyrosine kinase that phosphorylates and inhibits CDK1 and acts as a key regulator of meiosis during both prophase I and metaphase II. Required to maintain meiotic arrest in oocytes during the germinal vesicle (GV) stage, a long period of quiescence at dictyate prophase I, by phosphorylating CDK1 at 'Tyr-15', leading to inhibit CDK1 activity and prevent meiotic reentry. Also required for metaphase II exit during egg activation by phosphorylating CDK1 at 'Tyr-15', to ensure exit from meiosis in oocytes and promote pronuclear formation. This chain is Wee1-like protein kinase 2 (WEE2), found in Sus scrofa (Pig).